Here is a 214-residue protein sequence, read N- to C-terminus: NADH-quinone oxidoreductase subunit C (214 aa).

The protein belongs to the complex I 30 kDa subunit family. NDH-1 is composed of 14 different subunits. Subunits NuoB, C, D, E, F, and G constitute the peripheral sector of the complex.

Its subcellular location is the cell inner membrane. It carries out the reaction a quinone + NADH + 5 H(+)(in) = a quinol + NAD(+) + 4 H(+)(out). Functionally, NDH-1 shuttles electrons from NADH, via FMN and iron-sulfur (Fe-S) centers, to quinones in the respiratory chain. The immediate electron acceptor for the enzyme in this species is believed to be ubiquinone. Couples the redox reaction to proton translocation (for every two electrons transferred, four hydrogen ions are translocated across the cytoplasmic membrane), and thus conserves the redox energy in a proton gradient. The polypeptide is NADH-quinone oxidoreductase subunit C (Francisella tularensis subsp. holarctica (strain LVS)).